The primary structure comprises 112 residues: U-scoloptoxin(16)-Er5a (112 aa).

Residues Met1 to Ala26 form the signal peptide.

This sequence belongs to the scoloptoxin-16 family. Post-translationally, contains 2 disulfide bonds. Expressed by the venom gland.

It localises to the secreted. This is U-scoloptoxin(16)-Er5a from Ethmostigmus rubripes (Giant centipede).